Here is a 325-residue protein sequence, read N- to C-terminus: Aldo-keto reductase family 1 member A1 (325 aa).

Thr2 bears the N-acetylthreonine mark. A Phosphoserine modification is found at Ser4. Residues 11–20 (GQKMPLIGLG), Thr21, and Trp22 contribute to the NADP(+) site. Phosphoserine is present on Ser38. NADP(+) is bound at residue Asp45. Tyr50 acts as the Proton donor in catalysis. N6-acetyllysine; alternate is present on Lys127. At Lys127 the chain carries N6-succinyllysine; alternate. Lys145 carries the post-translational modification N6-succinyllysine. Ser162, Asn163, Ser211, Leu213, Ser215, Ser216, Lys263, Ser264, Ile265, Arg269, Gln272, and Asn273 together coordinate NADP(+). Ser211 is subject to Phosphoserine.

This sequence belongs to the aldo/keto reductase family. As to quaternary structure, monomer. As to expression, widely expressed.

It localises to the cytoplasm. It is found in the cytosol. The protein localises to the apical cell membrane. The catalysed reaction is a primary alcohol + NADP(+) = an aldehyde + NADPH + H(+). The enzyme catalyses L-gulonate + NADP(+) = aldehydo-D-glucuronate + NADPH + H(+). It carries out the reaction L-gulono-1,4-lactone + NADP(+) = D-glucurono-3,6-lactone + NADPH + H(+). It catalyses the reaction allyl alcohol + NADP(+) = acrolein + NADPH + H(+). The catalysed reaction is glycerol + NADP(+) = D-glyceraldehyde + NADPH + H(+). The enzyme catalyses glycerol + NADP(+) = L-glyceraldehyde + NADPH + H(+). It carries out the reaction hydroxyacetone + NADP(+) = methylglyoxal + NADPH + H(+). It catalyses the reaction 3-deoxyfructose + NADP(+) = 3-deoxyglucosone + NADPH + H(+). The catalysed reaction is (R)-mevalonate + NADP(+) = (R)-mevaldate + NADPH + H(+). The enzyme catalyses pyridine 3-methanol + NADP(+) = pyridine-3-carbaldehyde + NADPH + H(+). It carries out the reaction S-nitroso-CoA + NADPH + H(+) = sulfinamide-CoA + NADP(+). It catalyses the reaction S-nitrosoglutathione + NADPH + H(+) = S-(hydroxysulfenamide)glutathione + NADP(+). In terms of biological role, catalyzes the NADPH-dependent reduction of a wide variety of carbonyl-containing compounds to their corresponding alcohols. Displays enzymatic activity towards endogenous metabolites such as aromatic and aliphatic aldehydes, ketones, monosaccharides and bile acids, with a preference for negatively charged substrates, such as glucuronate and succinic semialdehyde. Plays an important role in ascorbic acid biosynthesis by catalyzing the reduction of D-glucuronic acid and D-glucurono-gamma-lactone. Functions as a detoxifiying enzyme by reducing a range of toxic aldehydes. Reduces methylglyoxal and 3-deoxyglucosone, which are present at elevated levels under hyperglycemic conditions and are cytotoxic. Involved in the detoxification of lipid-derived aldehydes like acrolein. Plays a role in the activation of procarcinogens, such as polycyclic aromatic hydrocarbon trans-dihydrodiols, and in the metabolism of various xenobiotics and drugs. Also acts as an inhibitor of protein S-nitrosylation by mediating degradation of S-nitroso-coenzyme A (S-nitroso-CoA), a cofactor required to S-nitrosylate proteins. S-nitroso-CoA reductase activity is involved in reprogramming intermediary metabolism in renal proximal tubules, notably by inhibiting protein S-nitrosylation of isoform 2 of PKM (PKM2). Also acts as a S-nitroso-glutathione reductase by catalyzing the NADPH-dependent reduction of S-nitrosoglutathione. Displays no reductase activity towards retinoids. This is Aldo-keto reductase family 1 member A1 from Mus musculus (Mouse).